The primary structure comprises 444 residues: Argininosuccinate synthase (444 aa).

ATP-binding positions include 17 to 25 (AFSGGLDTS) and alanine 43. Tyrosine 99 contributes to the L-citrulline binding site. ATP-binding residues include glycine 129 and threonine 131. 3 residues coordinate L-aspartate: threonine 131, asparagine 135, and aspartate 136. Residue asparagine 135 coordinates L-citrulline. Aspartate 136 serves as a coordination point for ATP. Arginine 139 and serine 192 together coordinate L-citrulline. Aspartate 194 contacts ATP. L-citrulline contacts are provided by threonine 201, glutamate 203, and glutamate 280.

The protein belongs to the argininosuccinate synthase family. Type 2 subfamily. In terms of assembly, homotetramer.

The protein localises to the cytoplasm. It catalyses the reaction L-citrulline + L-aspartate + ATP = 2-(N(omega)-L-arginino)succinate + AMP + diphosphate + H(+). Its pathway is amino-acid biosynthesis; L-arginine biosynthesis; L-arginine from L-ornithine and carbamoyl phosphate: step 2/3. In Delftia acidovorans (strain DSM 14801 / SPH-1), this protein is Argininosuccinate synthase.